The sequence spans 101 residues: Replication restart protein PriB (101 aa).

An SSB domain is found at 1 to 101 (MTTNNLVLAG…LHAENVELKT (101 aa)).

The protein belongs to the PriB family. As to quaternary structure, homodimer. Interacts with PriA and DnaT. Component of the replication restart primosome. Primosome assembly occurs via a 'hand-off' mechanism. PriA binds to replication forks, subsequently PriB then DnaT bind; DnaT then displaces ssDNA to generate the helicase loading substrate.

Its function is as follows. Involved in the restart of stalled replication forks, which reloads the replicative helicase on sites other than the origin of replication; the PriA-PriB pathway is the major replication restart pathway. During primosome assembly it facilitates complex formation between PriA and DnaT on DNA; stabilizes PriA on DNA. Stimulates the DNA unwinding activity of PriA helicase. The polypeptide is Replication restart protein PriB (Shewanella halifaxensis (strain HAW-EB4)).